The following is a 381-amino-acid chain: Probable serine/threonine-protein kinase PBL21 (381 aa).

C3 is lipidated: S-palmitoyl cysteine. One can recognise a Protein kinase domain in the interval 78–354; the sequence is FREVNLLGEG…GDIVVALEYL (277 aa). ATP-binding positions include 84-92 and K106; that span reads LGEGGFGRV. The active-site Proton acceptor is the D204. The disordered stretch occupies residues 362-381; the sequence is EARNVSSPSPEISRTPRRDL.

It belongs to the protein kinase superfamily. Ser/Thr protein kinase family. Post-translationally, palmitoylation at Cys-3 and Cys-7 are required for plasma membrane location.

The protein localises to the cell membrane. It catalyses the reaction L-seryl-[protein] + ATP = O-phospho-L-seryl-[protein] + ADP + H(+). The enzyme catalyses L-threonyl-[protein] + ATP = O-phospho-L-threonyl-[protein] + ADP + H(+). May be involved in plant defense signaling. This Arabidopsis thaliana (Mouse-ear cress) protein is Probable serine/threonine-protein kinase PBL21.